Consider the following 581-residue polypeptide: Arginine--tRNA ligase (581 aa).

Positions 126–136 (PNLAKEMHVGH) match the 'HIGH' region motif.

Belongs to the class-I aminoacyl-tRNA synthetase family. In terms of assembly, monomer.

The protein resides in the cytoplasm. The enzyme catalyses tRNA(Arg) + L-arginine + ATP = L-arginyl-tRNA(Arg) + AMP + diphosphate. The protein is Arginine--tRNA ligase of Shewanella sediminis (strain HAW-EB3).